Here is a 538-residue protein sequence, read N- to C-terminus: Chaperonin GroEL 1 (538 aa).

Residues 30-33 (TLGP), lysine 51, 87-91 (DGTTT), glycine 415, 479-481 (NAA), and aspartate 495 each bind ATP.

It belongs to the chaperonin (HSP60) family. In terms of assembly, forms a cylinder of 14 subunits composed of two heptameric rings stacked back-to-back. Interacts with the co-chaperonin GroES.

The protein localises to the cytoplasm. The catalysed reaction is ATP + H2O + a folded polypeptide = ADP + phosphate + an unfolded polypeptide.. Functionally, together with its co-chaperonin GroES, plays an essential role in assisting protein folding. The GroEL-GroES system forms a nano-cage that allows encapsulation of the non-native substrate proteins and provides a physical environment optimized to promote and accelerate protein folding. The protein is Chaperonin GroEL 1 of Chromobacterium violaceum (strain ATCC 12472 / DSM 30191 / JCM 1249 / CCUG 213 / NBRC 12614 / NCIMB 9131 / NCTC 9757 / MK).